Here is a 24-residue protein sequence, read N- to C-terminus: Ascaphin-6 (24 aa).

Expressed by the skin glands.

It localises to the secreted. In terms of biological role, antimicrobial peptide that shows higher potency against Gram-negative bacteria than against Gram-positive bacteria. Has a very week hemolytic activity. In Ascaphus truei (Coastal tailed frog), this protein is Ascaphin-6.